The sequence spans 464 residues: D-2-hydroxyglutarate dehydrogenase (464 aa).

One can recognise an FAD-binding PCMH-type domain in the interval 37 to 216 (FAPAPSAIVF…VEATMRLERQ (180 aa)). Positions 325, 329, and 339 each coordinate (R)-2-hydroxyglutarate. Arg325, Ser329, and Lys339 together coordinate (R)-malate. 2 residues coordinate Zn(2+): His374 and His381. Asn383 serves as a coordination point for (R)-2-hydroxyglutarate. Residue Glu420 participates in Zn(2+) binding. Residue His421 participates in (R)-2-hydroxyglutarate binding. Residue His421 coordinates (R)-malate.

It belongs to the FAD-binding oxidoreductase/transferase type 4 family. In terms of assembly, homodimer. FAD serves as cofactor.

The catalysed reaction is (R)-2-hydroxyglutarate + A = 2-oxoglutarate + AH2. It catalyses the reaction (R)-malate + A = oxaloacetate + AH2. With respect to regulation, activated by Zn(2+) ions at low concentrations (10 uM) and inhibited by Zn(2+), Fe(2+) and Ni(2+) at high concentrations (10 mM). Catalyzes the dehydrogenation of (R)-2-hydroxyglutarate (D-2-hydroxyglutarate or D-2-HG) to 2-oxoglutarate and of (R)-malate (D-malate) to oxaloacetate. Is functionally tied to L-serine biosynthesis, via its coupling with the D-3-phosphoglycerate dehydrogenase SerA, encoded by the adjacent gene in the locus. Is required for the utilization of D-2-hydroxyglutarate as well as D-malate as the sole carbon source for growth of P.stutzeri. Active in vitro with artificial electron acceptors such as 2,6-dichlorophenolindophenol (DCPIP) and appears to couple with electron transfer flavoprotein (ETF) for efficient oxidation of both D-2-hydroxyglutarate and D-malate in vivo. Cannot catalyze the oxidation of L-2-hydroxyglutarate, D-lactate, D-tartrate, D-2-hydroxybutanoate, D-mandelate, D-glycerate and D-phenyllactate. This chain is D-2-hydroxyglutarate dehydrogenase, found in Stutzerimonas stutzeri (strain A1501) (Pseudomonas stutzeri).